Consider the following 182-residue polypeptide: Adenine phosphoribosyltransferase (182 aa).

It belongs to the purine/pyrimidine phosphoribosyltransferase family. As to quaternary structure, homodimer.

The protein resides in the cytoplasm. The catalysed reaction is AMP + diphosphate = 5-phospho-alpha-D-ribose 1-diphosphate + adenine. It participates in purine metabolism; AMP biosynthesis via salvage pathway; AMP from adenine: step 1/1. Functionally, catalyzes a salvage reaction resulting in the formation of AMP, that is energically less costly than de novo synthesis. This Wolinella succinogenes (strain ATCC 29543 / DSM 1740 / CCUG 13145 / JCM 31913 / LMG 7466 / NCTC 11488 / FDC 602W) (Vibrio succinogenes) protein is Adenine phosphoribosyltransferase.